The following is a 279-amino-acid chain: uncharacterized protein (279 aa).

Residues I14–T71 form the HTH lysR-type domain. A DNA-binding region (H-T-H motif) is located at residues Q31 to K50.

The protein belongs to the LysR transcriptional regulatory family.

This is an uncharacterized protein from Methanocaldococcus jannaschii (strain ATCC 43067 / DSM 2661 / JAL-1 / JCM 10045 / NBRC 100440) (Methanococcus jannaschii).